Here is a 276-residue protein sequence, read N- to C-terminus: Undecaprenyl-diphosphatase 1 (276 aa).

The next 8 helical transmembrane spans lie at 1-21, 44-64, 87-107, 114-134, 150-170, 190-210, 222-242, and 251-271; these read MSLW…LFPV, QLLP…LWYF, GHLM…GLLL, VFHD…LLWL, LTFK…IPGF, AAEF…LLEL, DALL…RFLM, and LASF…WFMF.

It belongs to the UppP family.

It localises to the cell inner membrane. The catalysed reaction is di-trans,octa-cis-undecaprenyl diphosphate + H2O = di-trans,octa-cis-undecaprenyl phosphate + phosphate + H(+). Functionally, catalyzes the dephosphorylation of undecaprenyl diphosphate (UPP). Confers resistance to bacitracin. The protein is Undecaprenyl-diphosphatase 1 of Burkholderia pseudomallei (strain 1106a).